A 796-amino-acid polypeptide reads, in one-letter code: Fibroblast growth factor receptor 3 (796 aa).

Residues Met1 to Ala19 form the signal peptide. Residues Ala20–Ser358 lie on the Extracellular side of the membrane. The Ig-like C2-type 1 domain occupies Arg21–Thr119. Cysteines 56 and 102 form a disulfide. 2 N-linked (GlcNAc...) asparagine glycosylation sites follow: Asn91 and Asn113. The segment at Arg117 to Phe142 is disordered. Residues Gly125–Glu135 are compositionally biased toward acidic residues. 2 Ig-like C2-type domains span residues Pro140–Asp233 and Pro239–Thr344. An intrachain disulfide couples Cys165 to Cys217. 5 N-linked (GlcNAc...) asparagine glycosylation sites follow: Asn214, Asn251, Asn283, Asn304, and Asn317. Cys264 and Cys328 are joined by a disulfide. A helical membrane pass occupies residues Val359–Phe379. Residues Thr380–Thr796 lie on the Cytoplasmic side of the membrane. Residues Leu457–Leu746 enclose the Protein kinase domain. ATP is bound by residues Leu463 to Val471 and Lys493. Asp602 acts as the Proton acceptor in catalysis. A phosphotyrosine; by autocatalysis mark is found at Tyr632, Tyr633, Tyr709, and Tyr745.

Belongs to the protein kinase superfamily. Tyr protein kinase family. Fibroblast growth factor receptor subfamily. Monomer. Homodimer after ligand binding. Post-translationally, autophosphorylated. Binding of FGF family members together with heparan sulfate proteoglycan or heparin promotes receptor dimerization and autophosphorylation on tyrosine residues. Autophosphorylation occurs in trans between the two FGFR molecules present in the dimer. As to expression, undetectable in the adult skeletal muscle. Low levels of expression were detected in the liver, lung and kidney. Medium levels of expression were detected in the heart, spleen, intestine and eye. Highest expression is observed in the testis.

The protein resides in the cell membrane. The enzyme catalyses L-tyrosyl-[protein] + ATP = O-phospho-L-tyrosyl-[protein] + ADP + H(+). Its activity is regulated as follows. Present in an inactive conformation in the absence of bound ligand. Ligand binding leads to dimerization and activation by autophosphorylation on tyrosine residues. Its function is as follows. Tyrosine-protein kinase that acts as a cell-surface receptor for fibroblast growth factors and plays an essential role in the regulation of cell proliferation, differentiation and apoptosis. Plays an essential role in the regulation of chondrocyte differentiation, proliferation and apoptosis, and is required for normal skeleton development. Regulates both osteogenesis and postnatal bone mineralization by osteoblasts. Promotes apoptosis in chondrocytes, but can also promote cancer cell proliferation. Phosphorylates PLCG1, CBL and FRS2. Ligand binding leads to the activation of several signaling cascades. Activation of PLCG1 leads to the production of the cellular signaling molecules diacylglycerol and inositol 1,4,5-trisphosphate. Phosphorylation of FRS2 triggers recruitment of GRB2, GAB1, PIK3R1 and SOS1, and mediates activation of RAS, MAPK1/ERK2, MAPK3/ERK1 and the MAP kinase signaling pathway, as well as of the AKT1 signaling pathway. The chain is Fibroblast growth factor receptor 3 (FGFR3) from Pleurodeles waltl (Iberian ribbed newt).